We begin with the raw amino-acid sequence, 606 residues long: NADH-ubiquinone oxidoreductase chain 5 (606 aa).

The next 16 helical transmembrane spans lie at 1–21, 35–55, 87–107, 114–134, 140–160, 171–191, 211–233, 241–261, 272–292, 301–320, 325–347, 366–386, 413–433, 457–477, 482–502, and 582–602; these read MNLF…PIMV, YVKN…MMYL, LMFM…SMWY, INQF…LVTA, LFIG…WWFG, AILY…WFLS, FPLM…HPWL, TPVS…FLLV, LIQT…AICA, IIAF…IGLN, AFLH…GSII, LPFT…MPFL, LTAT…ALLG, LLIG…PVIT, MPLH…IIAF, and GLIK…MILF.

The protein belongs to the complex I subunit 5 family. As to quaternary structure, core subunit of respiratory chain NADH dehydrogenase (Complex I) which is composed of 45 different subunits.

It localises to the mitochondrion inner membrane. The catalysed reaction is a ubiquinone + NADH + 5 H(+)(in) = a ubiquinol + NAD(+) + 4 H(+)(out). Functionally, core subunit of the mitochondrial membrane respiratory chain NADH dehydrogenase (Complex I) which catalyzes electron transfer from NADH through the respiratory chain, using ubiquinone as an electron acceptor. Essential for the catalytic activity and assembly of complex I. This Balaenoptera musculus (Blue whale) protein is NADH-ubiquinone oxidoreductase chain 5 (MT-ND5).